The sequence spans 448 residues: Homogentisate 1,2-dioxygenase (448 aa).

His303 acts as the Proton acceptor in catalysis. Residues His346 and Glu352 each contribute to the Fe cation site. 2 residues coordinate homogentisate: Tyr361 and His382. His382 is a binding site for Fe cation.

Belongs to the homogentisate dioxygenase family. Hexamer; dimer of trimers. The cofactor is Fe cation.

The catalysed reaction is homogentisate + O2 = 4-maleylacetoacetate + H(+). The protein operates within amino-acid degradation; L-phenylalanine degradation; acetoacetate and fumarate from L-phenylalanine: step 4/6. Functionally, involved in the catabolism of homogentisate (2,5-dihydroxyphenylacetate or 2,5-OH-PhAc), a central intermediate in the degradation of phenylalanine and tyrosine. Catalyzes the oxidative ring cleavage of the aromatic ring of homogentisate to yield maleylacetoacetate. This chain is Homogentisate 1,2-dioxygenase, found in Rhodopseudomonas palustris (strain HaA2).